A 392-amino-acid polypeptide reads, in one-letter code: Speckle-type POZ protein-like B (392 aa).

Positions Lys31–Val161 constitute an MATH domain. Residues Thr200–Glu267 form the BTB domain.

Belongs to the Tdpoz family. As to quaternary structure, homodimer. Heterodimer with SPOP. Component of cullin-RING-based BCR (BTB-CUL3-RBX1) E3 ubiquitin-protein ligase complexes containing homodimeric SPOPL or the heterodimer formed by SPOP and SPOPL.

The protein resides in the nucleus. The protein operates within protein modification; protein ubiquitination. Functionally, component of a cullin-RING-based BCR (BTB-CUL3-RBX1) E3 ubiquitin-protein ligase complex that mediates the ubiquitination and subsequent proteasomal degradation of target proteins, but with relatively low efficiency. This Danio rerio (Zebrafish) protein is Speckle-type POZ protein-like B (spoplb).